Consider the following 1230-residue polypeptide: Protein transport protein Sec31A (1230 aa).

WD repeat units follow at residues 4–47, 64–111, 120–160, 166–206, 209–254, 258–298, and 301–342; these read KEID…EIFE, SSSH…AGDK, KHTG…TPMT, QPPE…PIIK, DHSN…SPLR, NHAR…VLYE, and TNTQ…DGLR. Residues 161 to 470 are interaction with SEC13; it reads PGAKTQPPED…IEASQTEFEK (310 aa). The stretch at 397–429 is one WD 8; interaction with SEC13 repeat; sequence SFSFGGKLVTFESVAVPLQQGAEQQRRQPVFIS. Residue arginine 423 is modified to Asymmetric dimethylarginine. Phosphoserine is present on residues serine 526 and serine 531. Lysine 646 is covalently cross-linked (Glycyl lysine isopeptide (Lys-Gly) (interchain with G-Cter in ubiquitin)). 2 disordered regions span residues 789 to 905 and 924 to 1104; these read QGKP…ASNA and MYTA…PIGN. Serine 798 is subject to Phosphoserine. Residues 799 to 1123 are interaction with PDCD6; it reads SQSPYERQPL…TEKITKKPIP (325 aa). The ALG-2-binding site motif-2 (ABS-2) signature appears at 841–847; sequence GFIMQGN. A compositionally biased stretch (pro residues) spans 866-876; the sequence is QLPPYPQPQPY. Composition is skewed to low complexity over residues 930–940 and 959–975; these read ASSPTSSSAAS and PSSSAYALPPGTTGTPP. Composition is skewed to polar residues over residues 981–995 and 1033–1064; these read PASQRTENQSFQDQA and PIMNPSGDPQSQGLQQQPSTPGPLSSHASFPQ. A Phosphothreonine modification is found at threonine 1171. A Phosphoserine modification is found at serine 1173. Lysine 1227 is covalently cross-linked (Glycyl lysine isopeptide (Lys-Gly) (interchain with G-Cter in ubiquitin)).

The protein belongs to the WD repeat SEC31 family. As to quaternary structure, COPII is composed of at least 5 proteins: the SEC23/24 complex, the SEC13/31 complex and SAR1. SEC13 and SEC31 make a 2:2 tetramer that forms the edge element of the COPII outer coat. The tetramer self-assembles in multiple copies to form the complete polyhedral cage. Interacts (via WD 8) with SEC13. Interacts with PDCD6; interaction takes place in response to cytosolic calcium increase and leads to bridge together the BCR(KLHL12) complex and SEC31A, leading to monoubiquitination. Interacts with KLHL12. In terms of processing, monoubiquitinated by the BCR(KLHL12) E3 ubiquitin ligase complex, leading to regulate the size of COPII coats.

The protein resides in the cytoplasm. Its subcellular location is the cytoplasmic vesicle. It localises to the COPII-coated vesicle membrane. It is found in the endoplasmic reticulum membrane. Component of the coat protein complex II (COPII) which promotes the formation of transport vesicles from the endoplasmic reticulum (ER). The coat has two main functions, the physical deformation of the endoplasmic reticulum membrane into vesicles and the selection of cargo molecules. The chain is Protein transport protein Sec31A (Sec31a) from Mus musculus (Mouse).